The sequence spans 161 residues: Regulator of ribonuclease activity A (161 aa).

Belongs to the RraA family. In terms of assembly, homotrimer. Binds to both RNA-binding sites in the C-terminal region of Rne and to RhlB.

It localises to the cytoplasm. Its function is as follows. Globally modulates RNA abundance by binding to RNase E (Rne) and regulating its endonucleolytic activity. Can modulate Rne action in a substrate-dependent manner by altering the composition of the degradosome. Modulates RNA-binding and helicase activities of the degradosome. The protein is Regulator of ribonuclease activity A of Yersinia pseudotuberculosis serotype O:1b (strain IP 31758).